The following is a 1373-amino-acid chain: MVLLRDNIEVQPLSNNRRIRKNFGHINLVADIPNLIEIQKNSYEKNFLQLNIKDSERKNKGLQSILNSIFPISDSSNIANLEFVKYEFDTPKYDVEECSQRSLSYAAPLKVTLRLSIWDIDEDTGTREIKGIKEQEVYMGDIPLMTKNGTFIINGTERVVVSQMHRSPGVFFYHDEGKIHSSGKLLYSARVIPYRGSWLDLEFDAKDIIYFRIDRKRKLYATTLLRAIGMSTEEIIKFYYNSVTYKLVQNKGWAVKFMPGHITAHRLTSDLVDADTGNVLLKAGQKITPRLAQKYFREGLNNVLVARETLIGKYLSEDLRDPVSDEILAKIGEMITADMLNVINDLKIKNVNVLVVNPQSGPYIRNTLFADKNQDRETALCDIFRVLRPGEPANIEAAEGLFYNLFFDAERYDLSEVGRIKMNSRLELNISEEVTVLTIDDIKNIVRVLVELKDGKGIIDDIDHLGNRRVRSVGELIENQFRIGLVRMEKSVIERMSAGDVDTLMPHDLVNSKILVSVVKEFFSTSQLSQFMDQTNPLSEITHKRRLSALGPGGLSRDRAGFEVRDVHPTHYGRICPIETPEGQNIGLINSMATYARINKHGFIESPYRRVKDGRVTDEVVYLSAIEEGKYKIGQANSKVDKDGVLQGEFINCRVEGGNFVMVEPHEVDFIDVTPMQVVSVAASLIPFLENDDANRALMGSNMQRQAVPLIKTDAPFVGTGVEGVVAKDSGASVLALHDGIVEQVDSNRIVIRTLAQKADGSPSVDIYNLLKFQKSNHNTCINQKPLVKVGHYVKKNDIIADGPSTDNGEIALGRNVLVAFLPWNGYNFEDSILISERIVKEDIFTSIHIEEFEVIARDTRLGPEEITRDIPNVSEEALSHLDEVGIIYVGAEVKAGDILVGKVTPKSESPITPEEKLLRAIFGEKAFDVKDSSLHVPSGVSGTVVEVRIFSRRGVEKDQRAIAIEKQQIEKLAKDRDDELEIVEHFVFSWLEKLLVGQVIINGPKQVKAGQTITTEVLKGLSKGQFWQLTVEDANIMNEIEQIKTHYDEKKEALNKRFATKVEKLQSGDDLPQGALKVVKVFIATKHKLQPGDKMAGRHGNKGVISRIVPEEDMPFLEDGTVVDIVLNPLGLPSRMNIGQILETHLGWASINLAKKISTLVQEYQNKKIAIEQIKKFLIKLYGENINSVLERSEEEIISFCKKVSKGVHFATPVFDGAKVQDVKDMLKLADQDPSGQVKLIDGRTGEYFDRLVTVGQKYLLKLHHLVDNKIHSRSIGPYSLVTQQPLGGKSHFGGQRFGEMECWALQAYGAAYTLQEMLTVKSDDVNGRIKTYDSIVRGENNFESGIPESFNVMIKEFRSLCLNVKLEVTSS.

Belongs to the RNA polymerase beta chain family. In terms of assembly, the RNAP catalytic core consists of 2 alpha, 1 beta, 1 beta' and 1 omega subunit. When a sigma factor is associated with the core the holoenzyme is formed, which can initiate transcription.

It carries out the reaction RNA(n) + a ribonucleoside 5'-triphosphate = RNA(n+1) + diphosphate. In terms of biological role, DNA-dependent RNA polymerase catalyzes the transcription of DNA into RNA using the four ribonucleoside triphosphates as substrates. The protein is DNA-directed RNA polymerase subunit beta of Rickettsia canadensis (strain McKiel).